The sequence spans 291 residues: Meteorin (291 aa).

The N-terminal stretch at 1–21 (MLVATLLCALCCGLLAASAHA) is a signal peptide. Intrachain disulfides connect Cys28-Cys49, Cys80-Cys116, Cys169-Cys240, Cys172-Cys264, and Cys182-Cys286.

It belongs to the meteorin family. In terms of assembly, monomer. As to expression, highly expressed in brain. Expressed in undifferentiated neural progenitors and in astrocyte lineage, particularly in Bergmann glia, a subtype of radial glia, and a few discrete neuronal populations residing in the superior colliculus, the ocular motor nucleus, the raphe and pontine nuclei, and in various thalamic nuclei. Weakly expressed in heart, kidney, skeletal muscle, spleen, testis, gut and lung.

Its subcellular location is the secreted. Its function is as follows. Involved in both glial cell differentiation and axonal network formation during neurogenesis. Promotes astrocyte differentiation and transforms cerebellar astrocytes into radial glia. Also induces axonal extension in small and intermediate neurons of sensory ganglia by activating nearby satellite glia. The protein is Meteorin (Metrn) of Mus musculus (Mouse).